We begin with the raw amino-acid sequence, 165 residues long: Small ribosomal subunit protein eS10 (165 aa).

Position 12 is a phosphotyrosine (Tyr-12). The segment at 92-165 (ATLRRSRPET…FGRGRGQPPQ (74 aa)) is disordered. Residues 97 to 128 (SRPETGRPRPKGLEGERPARLTRGEADRDTYR) show a composition bias toward basic and acidic residues. Residues Lys-138 and Lys-139 each participate in a glycyl lysine isopeptide (Lys-Gly) (interchain with G-Cter in ubiquitin) cross-link. Ser-146 bears the Phosphoserine mark. Omega-N-methylarginine is present on Arg-153. Over residues 154 to 165 (GGFGRGRGQPPQ) the composition is skewed to gly residues. 2 positions are modified to symmetric dimethylarginine: Arg-158 and Arg-160.

This sequence belongs to the eukaryotic ribosomal protein eS10 family. In terms of assembly, component of the small ribosomal subunit. The methylated form interacts with NPM1. In terms of processing, methylated by PRMT5. Methylation is necessary for its interaction with NPS1, its localization in the granular component (GC) region of the nucleolus, for the proper assembly of ribosomes, protein synthesis and optimal cell proliferation. Monoubiquitinated by ZNF598 when a ribosome has stalled during translation of poly(A) sequences, leading to preclude synthesis of a long poly-lysine tail and initiate the ribosome quality control (RQC) pathway to degrade the potentially detrimental aberrant nascent polypeptide. Deubiquitinated by OTUD3 and USP21, antagonizing ZNF598 activity. Deubiquitinated by OTUD1, antagonizing ZNF598 activity and stimulating formation of polysomes: deubiquitination by OTUD1 promotes stability and translation of a subset mRNAs with a high abundance of rare codons can limit the translation rate. Deubiquitinated by USP10.

Its subcellular location is the cytoplasm. It localises to the nucleus. The protein resides in the nucleolus. Functionally, component of the 40S ribosomal subunit. The ribosome is a large ribonucleoprotein complex responsible for the synthesis of proteins in the cell. The sequence is that of Small ribosomal subunit protein eS10 (RPS10) from Oryctolagus cuniculus (Rabbit).